A 554-amino-acid chain; its full sequence is MTMEPNPTSDHILDWLEGSVSFFPSFLDDPYNNGYIHEYEIWNQNQDISNQYQIDANTNSSNATNSTTNIVAASTTTSTTSLEPNSFNNIPFSDLPKKRNAEDELSLKKQPQNQKNKRLKSRPMNESDNGDAALEGTVVRKSGGNKKGAAKANGSNSNNGNNKDGRWAEQLLNPCAVAITGGNLNRVQHLLYVLHELASTTGDANHRLAAHGLRALTHHLSSSSSSTPSGTITFASTEPRFFQKSLLKFYEFSPWFSFPNNIANASILQVLAEEPNNLRTLHILDIGVSHGVQWPTFLEALSRRPGGPPPLVRLTVVNASSSTENDQNMETPFSIGPCGDTFSSGLLGYAQSLNVNLQIKKLDNHPLQTLNAKSVDTSSDETLIVCAQFRLHHLNHNNPDERSEFLKVLRGMEPKGVILSENNMECCCSSCGDFATGFSRRVEYLWRFLDSTSSAFKNRDSDERKMMEGEAAKALTNQREMNERREKWCERMKEAGFAGEVFGEDAIDGGRALLRKYDNNWEMKVEENSTSVELWWKSQPVSFCSLWKLDKQPE.

The disordered stretch occupies residues 76 to 165 (TTSTTSLEPN…NSNNGNNKDG (90 aa)). The span at 82–91 (LEPNSFNNIP) shows a compositional bias: polar residues. A compositionally biased stretch (basic and acidic residues) spans 95 to 107 (LPKKRNAEDELSL). Residues 150-162 (AKANGSNSNNGNN) are compositionally biased toward low complexity. The region spanning 159-548 (NGNNKDGRWA…QPVSFCSLWK (390 aa)) is the GRAS domain. The interval 166–227 (RWAEQLLNPC…HHLSSSSSST (62 aa)) is leucine repeat I (LRI). Residues 246–315 (LLKFYEFSPW…GGPPPLVRLT (70 aa)) form a VHIID region. The VHIID motif lies at 281 to 285 (LHILD). The interval 331–373 (TPFSIGPCGDTFSSGLLGYAQSLNVNLQIKKLDNHPLQTLNAK) is leucine repeat II (LRII). Residues 383 to 468 (LIVCAQFRLH…RDSDERKMME (86 aa)) form a PFYRE region. The tract at residues 471 to 548 (AAKALTNQRE…QPVSFCSLWK (78 aa)) is SAW.

It belongs to the GRAS family. In terms of tissue distribution, expressed in epidermal and cortical root cells.

It localises to the nucleus. Its function is as follows. Transcriptional regulator essential for Nod-factor-induced gene expression. Acts downstream of calcium spiking. May be a target of DMI3, a calcium/calmodulin-dependent protein kinase (CCaMK). Is essential for Nod factor-elicited expression of ERN1. Transcription factor involved in the control of strigolactone biosynthesis in roots through the activation of the beta-carotene isomerase D27, which participates in a pathway leading to biosynthesis of strigolactones. This chain is Protein NODULATION SIGNALING PATHWAY 1, found in Medicago truncatula (Barrel medic).